We begin with the raw amino-acid sequence, 669 residues long: DNA ligase (669 aa).

Residues 32–36 (DAEYD), 81–82 (SL), and E111 contribute to the NAD(+) site. Residue K113 is the N6-AMP-lysine intermediate of the active site. NAD(+)-binding residues include R134, E171, K290, and K314. Zn(2+) is bound by residues C408, C411, C426, and C432. In terms of domain architecture, BRCT spans 591-669 (EEALSLKGQT…EAELLAILGS (79 aa)).

The protein belongs to the NAD-dependent DNA ligase family. LigA subfamily. It depends on Mg(2+) as a cofactor. The cofactor is Mn(2+).

The catalysed reaction is NAD(+) + (deoxyribonucleotide)n-3'-hydroxyl + 5'-phospho-(deoxyribonucleotide)m = (deoxyribonucleotide)n+m + AMP + beta-nicotinamide D-nucleotide.. DNA ligase that catalyzes the formation of phosphodiester linkages between 5'-phosphoryl and 3'-hydroxyl groups in double-stranded DNA using NAD as a coenzyme and as the energy source for the reaction. It is essential for DNA replication and repair of damaged DNA. The chain is DNA ligase from Shewanella loihica (strain ATCC BAA-1088 / PV-4).